Consider the following 382-residue polypeptide: Chorismate synthase (382 aa).

NADP(+)-binding residues include Arg-39 and Arg-45. Residues 127 to 129 (RAS), 245 to 246 (QA), Gly-290, 305 to 309 (KPIPT), and Arg-331 each bind FMN.

This sequence belongs to the chorismate synthase family. In terms of assembly, homotetramer. The cofactor is FMNH2.

It carries out the reaction 5-O-(1-carboxyvinyl)-3-phosphoshikimate = chorismate + phosphate. It participates in metabolic intermediate biosynthesis; chorismate biosynthesis; chorismate from D-erythrose 4-phosphate and phosphoenolpyruvate: step 7/7. Its function is as follows. Catalyzes the anti-1,4-elimination of the C-3 phosphate and the C-6 proR hydrogen from 5-enolpyruvylshikimate-3-phosphate (EPSP) to yield chorismate, which is the branch point compound that serves as the starting substrate for the three terminal pathways of aromatic amino acid biosynthesis. This reaction introduces a second double bond into the aromatic ring system. In Desulfitobacterium hafniense (strain Y51), this protein is Chorismate synthase.